Consider the following 77-residue polypeptide: Apelin (77 aa).

A signal peptide spans 1–22; sequence MNLRLCVQALLLLWLSLTAVCG. A propeptide spanning residues 23–41 is cleaved from the precursor; it reads GSLMPLPDGNGLEDGNVRH. The interval 43–77 is disordered; it reads VQPRGSRNGPGPWQGGRRKFRRQRPRLSHKGPMPF. A compositionally biased stretch (basic residues) spans 58–71; that stretch reads GRRKFRRQRPRLSH.

This sequence belongs to the apelin family. Post-translationally, several active peptides may be produced by proteolytic processing of the peptide precursor. In terms of tissue distribution, expressed in the brain with highest levels in the frontal cortex, thalamus, hypothalamus and midbrain. Secreted by the mammary gland into the colostrum and the milk.

It localises to the secreted. It is found in the extracellular space. Its function is as follows. Peptide hormone that functions as endogenous ligand for the G-protein-coupled apelin receptor (APLNR/APJ), that plays a role in cadiovascular homeostasis. Functions as a balanced agonist activating both G(i) protein pathway and beta-arrestin pathway of APLNR. Downstream G proteins activation, apelin can inhibit cAMP production and activate key intracellular effectors such as ERKs. On the other hand, APLNR activation induces beta-arrestin recruitment to the membrane leading to desensitization and internalization of the receptor. Apelin blunts cardiac hypertrophic induction from APLNR on response to pathological stimuli, but also induces myocardial hypertrophy under normal conditions. Apelin-36 dissociates more hardly than (pyroglu)apelin-13 from APLNR. Involved in the regulation of cardiac precursor cell movements during gastrulation and heart morphogenesis. Has an inhibitory effect on cytokine production in response to T-cell receptor/CD3 cross-linking; the oral intake of apelin in the colostrum and the milk might therefore modulate immune responses in neonates. Plays a role in early coronary blood vessels formation. Mediates myocardial contractility in an ERK1/2-dependent manner. May also have a role in the central control of body fluid homeostasis by influencing vasopressin release and drinking behavior. (Microbial infection) Endogenous ligand for the apelin receptor (APLNR), an alternative coreceptor with CD4 for HIV-1 infection. Inhibits HIV-1 entry in cells coexpressing CD4 and APLNR. Apelin-36 has a greater inhibitory activity on HIV infection than other synthetic apelin derivatives. The chain is Apelin from Homo sapiens (Human).